A 626-amino-acid chain; its full sequence is Methanol dehydrogenase [cytochrome c] subunit 1 (626 aa).

The first 27 residues, 1–27, serve as a signal peptide directing secretion; sequence MSRFVTSVSALAMLALAPAALSSGAYA. Cysteines 130 and 131 form a disulfide. Residues Glu-204 and Asn-288 each coordinate Ca(2+). The active-site Proton acceptor is Asp-330. A disulfide bridge links Cys-413 with Cys-442.

Belongs to the bacterial PQQ dehydrogenase family. Heterotetramer composed of 2 alpha and 2 beta subunits. The cofactor is pyrroloquinoline quinone. Requires Ca(2+) as cofactor.

Its subcellular location is the cell inner membrane. The enzyme catalyses 2 Fe(III)-[cytochrome cL] + a primary alcohol = 2 Fe(II)-[cytochrome cL] + an aldehyde + 2 H(+). In terms of biological role, catalyzes the oxidation of primary alcohols including methanol. This Methylorubrum extorquens (strain ATCC 14718 / DSM 1338 / JCM 2805 / NCIMB 9133 / AM1) (Methylobacterium extorquens) protein is Methanol dehydrogenase [cytochrome c] subunit 1 (moxF).